A 273-amino-acid chain; its full sequence is Putative phosphoenolpyruvate synthase regulatory protein (273 aa).

An ADP-binding site is contributed by 153 to 160 (AVSRAGKT).

Belongs to the pyruvate, phosphate/water dikinase regulatory protein family. PSRP subfamily.

The catalysed reaction is [pyruvate, water dikinase] + ADP = [pyruvate, water dikinase]-phosphate + AMP + H(+). It carries out the reaction [pyruvate, water dikinase]-phosphate + phosphate + H(+) = [pyruvate, water dikinase] + diphosphate. In terms of biological role, bifunctional serine/threonine kinase and phosphorylase involved in the regulation of the phosphoenolpyruvate synthase (PEPS) by catalyzing its phosphorylation/dephosphorylation. In Xanthomonas campestris pv. campestris (strain 8004), this protein is Putative phosphoenolpyruvate synthase regulatory protein.